We begin with the raw amino-acid sequence, 442 residues long: MKPGPPHRAGAAHGAGAGAGAAAGPGARGLLLPPLLLLLLAGRAAGAQRWRSENFERPVDLEGSGDDDSFPDDELDDLYSGSGSGYFEQESGIETAMRFSPDVALAVSTTPAVLPTTNIQPVGTPFEELPSERPTLEPATSPLVVTEVPEEPSQRATTVSTTMATTAATSTGDPTVATVPATVATATPSTPAAPPFTATTAVIRTTGVRRLLPLPLTTVATARATTPEAPSPPTTAAVLDTEAPTPRLVSTATSRPRALPRPATTQEPDIPERSTLPLGTTAPGPTEVAQTPTPETFLTTIRDEPEVPVSGGPSGDFELPEEETTQPDTANEVVAVGGAAAKASSPPGTLPKGARPGPGLLDNAIDSGSSAAQLPQKSILERKEVLVAVIVGGVVGALFAAFLVTLLIYRMKKKDEGSYTLEEPKQASVTYQKPDKQEEFYA.

2 disordered regions span residues 1-24 (MKPG…AAAG) and 57-87 (RPVD…SGYF). At 1 to 387 (MKPGPPHRAG…SILERKEVLV (387 aa)) the chain is on the extracellular side. Positions 13–24 (HGAGAGAGAAAG) are enriched in gly residues. The span at 63 to 77 (GSGDDDSFPDDELDD) shows a compositional bias: acidic residues. 4 O-linked (Xyl...) (glycosaminoglycan) serine glycosylation sites follow: serine 80, serine 82, serine 84, and serine 91. O-linked (GalNAc) serine; by GALNT13 glycosylation occurs at serine 108. Threonine 109 and threonine 110 each carry an O-linked (GalNAc) threonine; by GALNT13 glycan. 3 disordered regions span residues 150 to 173 (EEPS…STGD), 225 to 326 (TTPE…ETTQ), and 340 to 367 (AAKA…AIDS). Low complexity-rich tracts occupy residues 156-173 (ATTV…STGD), 225-238 (TTPE…TAAV), and 275-286 (TLPLGTTAPGPT). Residue serine 160 is glycosylated (O-linked (GalNAc) serine; by GALNT13). O-linked (GalNAc) threonine; by GALNT13 glycans are attached at residues threonine 161, threonine 162, and threonine 169. An O-linked (GalNAc) serine; by GALNT13 glycan is attached at serine 170. Residue threonine 171 is glycosylated (O-linked (GalNAc) threonine; by GALNT13). The span at 288-299 (VAQTPTPETFLT) shows a compositional bias: polar residues. O-linked (Xyl...) (glycosaminoglycan) serine glycosylation is found at serine 314 and serine 367. The helical transmembrane segment at 388–408 (AVIVGGVVGALFAAFLVTLLI) threads the bilayer. A phosphotyrosine mark is found at tyrosine 409, tyrosine 419, tyrosine 431, and tyrosine 441. Residues 409 to 442 (YRMKKKDEGSYTLEEPKQASVTYQKPDKQEEFYA) are Cytoplasmic-facing. The interval 419-442 (YTLEEPKQASVTYQKPDKQEEFYA) is disordered. A compositionally biased stretch (basic and acidic residues) spans 433–442 (KPDKQEEFYA).

The protein belongs to the syndecan proteoglycan family. As to quaternary structure, interacts with TIAM1. Interacts with PTN (via heparan sulfate chains); this interaction mediates the neurite outgrowth-promoting signal from PTN to the cytoskeleton of growing neurites; this interaction mediates osteoblast recruitment. Interacts with MDK; this interaction induces SDC3 clustering; this interaction induces neuronal cell adhesion and neurite outgrowth. O-glycosylated within the Thr/Ser-rich region which could interact with lectin domains on other molecules. In terms of tissue distribution, expressed in the nervous system, the adrenal gland, and the spleen.

It is found in the cell membrane. Functionally, cell surface proteoglycan that may bear heparan sulfate. May have a role in the organization of cell shape by affecting the actin cytoskeleton, possibly by transferring signals from the cell surface in a sugar-dependent mechanism. The chain is Syndecan-3 (SDC3) from Homo sapiens (Human).